The sequence spans 361 residues: D-alanine--D-alanine ligase (361 aa).

The ATP-grasp domain occupies 134–344 (KLLLKSFNIP…FKDLIDNLID (211 aa)). 167 to 222 (KEVLGYPVIVKPAVLGSSIGINVAYSENQIESCIEEALKYDLTIVIEKFIEAREIE) contacts ATP. Asp297, Glu311, and Asn313 together coordinate Mg(2+).

This sequence belongs to the D-alanine--D-alanine ligase family. Mg(2+) serves as cofactor. The cofactor is Mn(2+).

It localises to the cytoplasm. The catalysed reaction is 2 D-alanine + ATP = D-alanyl-D-alanine + ADP + phosphate + H(+). It participates in cell wall biogenesis; peptidoglycan biosynthesis. Cell wall formation. This chain is D-alanine--D-alanine ligase, found in Borreliella afzelii (strain PKo) (Borrelia afzelii).